The primary structure comprises 435 residues: Protein CHLOROPLAST IMPORT APPARATUS 2 (435 aa).

Residues 1-59 (MSACLSSGGGGAAAYSFELEKVKSPPPSSSTTTTRATSPSSTISESSNSPLAISTRKPR) constitute a chloroplast transit peptide. Disordered regions lie at residues 21 to 66 (KVKS…KRPN) and 412 to 435 (ADQR…SGQR). Residues 29 to 49 (SSTTTTRATSPSSTISESSNS) are compositionally biased toward low complexity. Residues 56-65 (RKPRTQRKRP) show a composition bias toward basic residues. A CCT domain is found at 383–425 (REASVLRYKEKRRTRLFSKKIRYQVRKLNADQRPRMKGRFVRR).

As to expression, expressed in leaves and young flower buds.

It localises to the plastid. The protein resides in the chloroplast. Its subcellular location is the nucleus. Its function is as follows. Responsible for specific up-regulation of the translocon genes TOC33 and TOC75 in leaves. Involved in the general chloroplast protein import pathway regulation, including protein import and protein translation efficiencies. In Arabidopsis thaliana (Mouse-ear cress), this protein is Protein CHLOROPLAST IMPORT APPARATUS 2 (CIA2).